We begin with the raw amino-acid sequence, 601 residues long: Glutamine--fructose-6-phosphate aminotransferase [isomerizing] (601 aa).

Cysteine 2 functions as the Nucleophile; for GATase activity in the catalytic mechanism. Residues 2–218 (CGIVGYIGYD…DHEIVIVKKD (217 aa)) enclose the Glutamine amidotransferase type-2 domain. 2 SIS domains span residues 284–423 (IIND…EHGR) and 453–591 (IATD…VDKP). The active-site For Fru-6P isomerization activity is the lysine 596.

As to quaternary structure, homodimer.

It localises to the cytoplasm. The enzyme catalyses D-fructose 6-phosphate + L-glutamine = D-glucosamine 6-phosphate + L-glutamate. Catalyzes the first step in hexosamine metabolism, converting fructose-6P into glucosamine-6P using glutamine as a nitrogen source. The protein is Glutamine--fructose-6-phosphate aminotransferase [isomerizing] of Staphylococcus aureus (strain Mu50 / ATCC 700699).